Reading from the N-terminus, the 288-residue chain is Light-independent protochlorophyllide reductase iron-sulfur ATP-binding protein (288 aa).

ATP contacts are provided by residues Gly10–Thr15 and Lys39. A Mg(2+)-binding site is contributed by Ser14. [4Fe-4S] cluster contacts are provided by Cys95 and Cys129. Residue Asn180 to Arg181 coordinates ATP.

It belongs to the NifH/BchL/ChlL family. As to quaternary structure, homodimer. Protochlorophyllide reductase is composed of three subunits; ChlL, ChlN and ChlB. It depends on [4Fe-4S] cluster as a cofactor.

It carries out the reaction chlorophyllide a + oxidized 2[4Fe-4S]-[ferredoxin] + 2 ADP + 2 phosphate = protochlorophyllide a + reduced 2[4Fe-4S]-[ferredoxin] + 2 ATP + 2 H2O. It participates in porphyrin-containing compound metabolism; chlorophyll biosynthesis (light-independent). Component of the dark-operative protochlorophyllide reductase (DPOR) that uses Mg-ATP and reduced ferredoxin to reduce ring D of protochlorophyllide (Pchlide) to form chlorophyllide a (Chlide). This reaction is light-independent. The L component serves as a unique electron donor to the NB-component of the complex, and binds Mg-ATP. The sequence is that of Light-independent protochlorophyllide reductase iron-sulfur ATP-binding protein from Nostoc punctiforme (strain ATCC 29133 / PCC 73102).